A 245-amino-acid chain; its full sequence is Eukaryotic translation initiation factor 6 (245 aa).

Phosphoserine; by CK1 is present on residues S174 and S175. S231 bears the Phosphoserine mark.

It belongs to the eIF-6 family. As to quaternary structure, monomer. Associates with the 60S ribosomal subunit. Post-translationally, phosphorylation at Ser-174 and Ser-175 promotes nuclear export.

It localises to the cytoplasm. The protein resides in the nucleus. It is found in the nucleolus. Functionally, binds to the 60S ribosomal subunit and prevents its association with the 40S ribosomal subunit to form the 80S initiation complex in the cytoplasm. Is also involved in ribosome biogenesis. Associates with pre-60S subunits in the nucleus and is involved in its nuclear export. Cytoplasmic release of TIF6 from 60S subunits and nuclear relocalization is promoted by the GTPase RIA1/EFL1 and by SDO1. Also required for pre-rRNA processing. This Saccharomyces cerevisiae (strain ATCC 204508 / S288c) (Baker's yeast) protein is Eukaryotic translation initiation factor 6.